Consider the following 388-residue polypeptide: Chaperone protein DnaJ (388 aa).

The J domain occupies 6-71; that stretch reads DYYEILGVPR…EKRKLYDQFG (66 aa). A CR-type zinc finger spans residues 147 to 229; it reads GCEKEIPIYR…CGGTGNVRRQ (83 aa). 8 residues coordinate Zn(2+): Cys160, Cys163, Cys177, Cys180, Cys203, Cys206, Cys217, and Cys220. CXXCXGXG motif repeat units lie at residues 160-167, 177-184, 203-210, and 217-224; these read CSVCGGSG, CQKCGGTG, CDACGGTG, and CRECGGTG.

This sequence belongs to the DnaJ family. Homodimer. Requires Zn(2+) as cofactor.

It is found in the cytoplasm. Functionally, participates actively in the response to hyperosmotic and heat shock by preventing the aggregation of stress-denatured proteins and by disaggregating proteins, also in an autonomous, DnaK-independent fashion. Unfolded proteins bind initially to DnaJ; upon interaction with the DnaJ-bound protein, DnaK hydrolyzes its bound ATP, resulting in the formation of a stable complex. GrpE releases ADP from DnaK; ATP binding to DnaK triggers the release of the substrate protein, thus completing the reaction cycle. Several rounds of ATP-dependent interactions between DnaJ, DnaK and GrpE are required for fully efficient folding. Also involved, together with DnaK and GrpE, in the DNA replication of plasmids through activation of initiation proteins. In Caldicellulosiruptor bescii (strain ATCC BAA-1888 / DSM 6725 / KCTC 15123 / Z-1320) (Anaerocellum thermophilum), this protein is Chaperone protein DnaJ.